Consider the following 86-residue polypeptide: Small ribosomal subunit protein bS20 (86 aa).

Residues 1 to 25 (MANIKSQQKRNKTNERARLRNKSVK) form a disordered region.

It belongs to the bacterial ribosomal protein bS20 family.

Its function is as follows. Binds directly to 16S ribosomal RNA. This is Small ribosomal subunit protein bS20 from Mycobacterium avium (strain 104).